Reading from the N-terminus, the 255-residue chain is Acetylglutamate kinase (255 aa).

Residues 40–41 (GG), Arg62, and Asn153 each bind substrate.

This sequence belongs to the acetylglutamate kinase family. ArgB subfamily.

The protein localises to the cytoplasm. The enzyme catalyses N-acetyl-L-glutamate + ATP = N-acetyl-L-glutamyl 5-phosphate + ADP. It participates in amino-acid biosynthesis; L-arginine biosynthesis; N(2)-acetyl-L-ornithine from L-glutamate: step 2/4. Its function is as follows. Catalyzes the ATP-dependent phosphorylation of N-acetyl-L-glutamate. The chain is Acetylglutamate kinase from Bacillus thuringiensis (strain Al Hakam).